The following is a 342-amino-acid chain: Uroporphyrinogen decarboxylase (342 aa).

Substrate contacts are provided by residues 26-30, Asp-76, Tyr-150, Ser-205, and His-321; that span reads RQAGR.

It belongs to the uroporphyrinogen decarboxylase family. In terms of assembly, homodimer.

The protein localises to the cytoplasm. It carries out the reaction uroporphyrinogen III + 4 H(+) = coproporphyrinogen III + 4 CO2. It participates in porphyrin-containing compound metabolism; protoporphyrin-IX biosynthesis; coproporphyrinogen-III from 5-aminolevulinate: step 4/4. Its function is as follows. Catalyzes the decarboxylation of four acetate groups of uroporphyrinogen-III to yield coproporphyrinogen-III. This is Uroporphyrinogen decarboxylase from Sphingopyxis alaskensis (strain DSM 13593 / LMG 18877 / RB2256) (Sphingomonas alaskensis).